The sequence spans 190 residues: Cytoplasmic envelopment protein 3 (190 aa).

Gly-2 carries the N-myristoyl glycine; by host lipid modification. The disordered stretch occupies residues 27–190; it reads RQVSLRSYDN…TKKPAASLPF (164 aa). Polar residues predominate over residues 30 to 43; the sequence is SLRSYDNIPPTSSS. Over residues 44 to 58 the composition is skewed to acidic residues; that stretch reads DEGEDDDDGEDDDNE. Residues 80 to 90 show a composition bias toward basic and acidic residues; it reads SHREATHDGSK. A compositionally biased stretch (basic residues) spans 108–123; the sequence is KQSKKKKKPSKHHHHQ. The span at 130 to 139 shows a compositional bias: acidic residues; sequence ETDDLDEEDT.

This sequence belongs to the herpesviridae cytoplasmic envelopment protein 3 family. Interacts with cytoplasmic envelopment protein 2; this interaction is essential for the proper localization of each protein to the assembly complex and thus for the production of infectious virus. Post-translationally, myristoylation and palmitoylation (probably on one or more of the nearby cysteines at the N-terminus) enable membrane-binding and Golgi apparatus-specific targeting and are essential for efficient packaging. In terms of processing, phosphorylated. Phosphorylation does not seem to be required for recycling to the host Golgi apparatus. Packaging is selective for underphosphorylated forms.

Its subcellular location is the virion tegument. It is found in the virion membrane. It localises to the host cell membrane. The protein resides in the host Golgi apparatus membrane. Plays an important role in the cytoplasmic envelopment of tegument proteins and capsids during the assembly and egress processes. Also participates in viral entry at the fusion step probably by regulating the core fusion machinery. This chain is Cytoplasmic envelopment protein 3 (UL99), found in Human cytomegalovirus (strain AD169) (HHV-5).